The primary structure comprises 255 residues: Zinc import ATP-binding protein ZnuC 1 (255 aa).

The region spanning 7–220 (IRLQDVTVKI…PAFINLFGTQ (214 aa)) is the ABC transporter domain. An ATP-binding site is contributed by 39–46 (GPNGAGKS). Residues 229 to 255 (HHHHDHHHHTDGTVAAGSECSHGDQHA) form a disordered region.

The protein belongs to the ABC transporter superfamily. Zinc importer (TC 3.A.1.15.5) family. As to quaternary structure, the complex is composed of two ATP-binding proteins (ZnuC), two transmembrane proteins (ZnuB) and a solute-binding protein (ZnuA).

The protein localises to the cell inner membrane. It catalyses the reaction Zn(2+)(out) + ATP(in) + H2O(in) = Zn(2+)(in) + ADP(in) + phosphate(in) + H(+)(in). Its function is as follows. Part of the ABC transporter complex ZnuABC involved in zinc import. Responsible for energy coupling to the transport system. This is Zinc import ATP-binding protein ZnuC 1 from Hahella chejuensis (strain KCTC 2396).